The sequence spans 700 residues: Endoglucanase A (700 aa).

The signal sequence occupies residues 1–33 (MKTRQRKRLFVSAALAVSLTMTVPMPASVNAAA). Residue Glu213 is part of the active site. Positions 550–700 (NSDLVVQYKD…DGQLVWGIEP (151 aa)) constitute a CBM3 domain.

This sequence belongs to the glycosyl hydrolase 44 (cellulase J) family. In terms of processing, a short form (EG-A-S) arises from post-translational proteolysis of approximately 150 AA at the C-terminus of EG-A-L.

It carries out the reaction Endohydrolysis of (1-&gt;4)-beta-D-glucosidic linkages in cellulose, lichenin and cereal beta-D-glucans.. The sequence is that of Endoglucanase A (celA) from Paenibacillus lautus (Bacillus lautus).